The following is a 701-amino-acid chain: Translation factor GUF1, mitochondrial (701 aa).

The N-terminal 29 residues, 1-29, are a transit peptide targeting the mitochondrion; the sequence is MSCCKGLTPQCVRVRLPRRPALSHPARLY. Over residues 23-50 the composition is skewed to low complexity; that stretch reads SHPARLYSSSSSSNSHSSPSRPRLLSRP. The interval 23 to 85 is disordered; that stretch reads SHPARLYSSS…RSSHHSSAPM (63 aa). Positions 98 to 283 constitute a tr-type G domain; the sequence is ERYRNFCVIA…AVIEQIPHPT (186 aa). GTP is bound by residues 107 to 114, 172 to 176, and 226 to 229; these read AHVDHGKS, DTPGH, and NKID.

This sequence belongs to the TRAFAC class translation factor GTPase superfamily. Classic translation factor GTPase family. LepA subfamily.

It localises to the mitochondrion inner membrane. The enzyme catalyses GTP + H2O = GDP + phosphate + H(+). Promotes mitochondrial protein synthesis. May act as a fidelity factor of the translation reaction, by catalyzing a one-codon backward translocation of tRNAs on improperly translocated ribosomes. Binds to mitochondrial ribosomes in a GTP-dependent manner. This Pyricularia oryzae (strain 70-15 / ATCC MYA-4617 / FGSC 8958) (Rice blast fungus) protein is Translation factor GUF1, mitochondrial.